The primary structure comprises 471 residues: Ribulose bisphosphate carboxylase large chain (471 aa).

The substrate site is built by Asn-115 and Thr-165. Residue Lys-167 is the Proton acceptor of the active site. Lys-169 serves as a coordination point for substrate. Residues Lys-193, Asp-195, and Glu-196 each coordinate Mg(2+). At Lys-193 the chain carries N6-carboxylysine. The active-site Proton acceptor is the His-286. Substrate-binding residues include Arg-287, His-319, and Ser-371.

It belongs to the RuBisCO large chain family. Type I subfamily. In terms of assembly, heterohexadecamer of 8 large chains and 8 small chains. Mg(2+) serves as cofactor.

It carries out the reaction 2 (2R)-3-phosphoglycerate + 2 H(+) = D-ribulose 1,5-bisphosphate + CO2 + H2O. The enzyme catalyses D-ribulose 1,5-bisphosphate + O2 = 2-phosphoglycolate + (2R)-3-phosphoglycerate + 2 H(+). Functionally, ruBisCO catalyzes two reactions: the carboxylation of D-ribulose 1,5-bisphosphate, the primary event in carbon dioxide fixation, as well as the oxidative fragmentation of the pentose substrate. Both reactions occur simultaneously and in competition at the same active site. This is Ribulose bisphosphate carboxylase large chain from Alvinoconcha hessleri symbiotic bacterium.